A 1049-amino-acid chain; its full sequence is Bifunctional cytochrome P450/NADPH--P450 reductase (1049 aa).

The tract at residues 2 to 472 is cytochrome P450; sequence TIKEMPQPKT…STEQSAKKVR (471 aa). (9Z)-hexadecenoate is bound at residue Tyr-52. A heme-binding site is contributed by Cys-401. The NADPH--P450 reductase stretch occupies residues 473–1049; sequence KKAENAHNTP…GRYAKDVWAG (577 aa). Residues 483-622 form the Flavodoxin-like domain; sequence LLVLYGSNMG…TYEEWREHMW (140 aa). Residues 489-494, 536-539, 570-572, and 578-580 each bind FMN; these read SNMGTA, SYNG, CGD, and TYQ. The 233-residue stretch at 660 to 892 folds into the FAD-binding FR-type domain; that stretch reads HGAFSTNVVA…STPQSEFTLP (233 aa).

This sequence in the N-terminal section; belongs to the cytochrome P450 family. It depends on FAD as a cofactor. FMN serves as cofactor. Requires heme as cofactor.

The protein resides in the cytoplasm. It carries out the reaction 2 oxidized [cytochrome P450] + NADPH = 2 reduced [cytochrome P450] + NADP(+) + H(+). The catalysed reaction is an organic molecule + reduced [NADPH--hemoprotein reductase] + O2 = an alcohol + oxidized [NADPH--hemoprotein reductase] + H2O + H(+). Inhibited by N-(12-imidazolyl-dodecanoyl)-L-leucine. Its function is as follows. Functions as a fatty acid monooxygenase. Catalyzes hydroxylation of fatty acids at omega-1, omega-2 and omega-3 positions. Shows activity toward medium and long-chain fatty acids, with optimum chain lengths of 12, 14 and 16 carbons (lauric, myristic, and palmitic acids). Able to metabolize some of these primary metabolites to secondary and tertiary products. Marginal activity towards short chain lengths of 8-10 carbons. Hydroxylates highly branched fatty acids, which play an essential role in membrane fluidity regulation. Also displays a NADPH-dependent reductase activity in the C-terminal domain, which allows electron transfer from NADPH to the heme iron of the cytochrome P450 N-terminal domain. Involved in inactivation of quorum sensing signals of other competing bacteria by oxidazing efficiently acyl homoserine lactones (AHLs), molecules involved in quorum sensing signaling pathways, and their lactonolysis products acyl homoserines (AHs). The sequence is that of Bifunctional cytochrome P450/NADPH--P450 reductase from Priestia megaterium (strain ATCC 14581 / DSM 32 / CCUG 1817 / JCM 2506 / NBRC 15308 / NCIMB 9376 / NCTC 10342 / NRRL B-14308 / VKM B-512 / Ford 19) (Bacillus megaterium).